The primary structure comprises 379 residues: Probable malonyl-CoA-acyl carrier protein transacylase, mitochondrial (379 aa).

A mitochondrion-targeting transit peptide spans 1–23 (MLAARRLLRSPRITGALSWSRWS). Catalysis depends on residues Ser158 and His275.

The protein belongs to the type II malonyltransferase family.

Its subcellular location is the mitochondrion. It catalyses the reaction holo-[ACP] + malonyl-CoA = malonyl-[ACP] + CoA. It participates in lipid metabolism; fatty acid biosynthesis. Its function is as follows. Catalyzes the transfer of a malonyl moiety from malonyl-CoA to the free thiol group of the phosphopantetheine arm of the ACP protein. This suggests the existence of the biosynthesis of fatty acids in mitochondria. This is Probable malonyl-CoA-acyl carrier protein transacylase, mitochondrial from Drosophila melanogaster (Fruit fly).